Consider the following 81-residue polypeptide: Control protein C.BamHI (81 aa).

One can recognise an HTH cro/C1-type domain in the interval 13–68 (VRQIRLSKSNMSQEKLAFECDLHRTYISDIERGTRNVSLDNIEKISKALGVQPKDL). Residues 25–44 (QEKLAFECDLHRTYISDIER) constitute a DNA-binding region (H-T-H motif).

Its function is as follows. May help modulate methylase (M) and restriction enzyme (R) expression as cells undergo physiological changes such as sporulation or transformation. This is Control protein C.BamHI from Bacillus amyloliquefaciens (Bacillus velezensis).